The primary structure comprises 643 residues: Threonine--tRNA ligase (643 aa).

One can recognise a TGS domain in the interval 1–61 (MPIITLPDGS…TEDSTLEIIT (61 aa)). Positions 243-534 (DHRKIGKALD…ITEEYAGFFP (292 aa)) are catalytic. 3 residues coordinate Zn(2+): cysteine 334, histidine 385, and histidine 511.

The protein belongs to the class-II aminoacyl-tRNA synthetase family. Homodimer. Zn(2+) serves as cofactor.

It localises to the cytoplasm. It carries out the reaction tRNA(Thr) + L-threonine + ATP = L-threonyl-tRNA(Thr) + AMP + diphosphate + H(+). Catalyzes the attachment of threonine to tRNA(Thr) in a two-step reaction: L-threonine is first activated by ATP to form Thr-AMP and then transferred to the acceptor end of tRNA(Thr). Also edits incorrectly charged L-seryl-tRNA(Thr). This is Threonine--tRNA ligase from Mannheimia succiniciproducens (strain KCTC 0769BP / MBEL55E).